The primary structure comprises 509 residues: Group 3 secretory phospholipase A2 (509 aa).

The first 19 residues, 1–19 (MGVQAGLFGMLGFLGVALG), serve as a signal peptide directing secretion. The disordered stretch occupies residues 123 to 149 (ESPAGARKKRAAGQSGVPGGGHQREKR). A phospholipase A2-like region spans residues 150-291 (GWTMPGTLWC…SWSSRATSPT (142 aa)). Tryptophan 158, glycine 160, and glycine 162 together coordinate Ca(2+). Cystine bridges form between cysteine 159/cysteine 181, cysteine 180/cysteine 220, cysteine 187/cysteine 213, and cysteine 211/cysteine 244. Residue asparagine 167 is glycosylated (N-linked (GlcNAc...) asparagine). Histidine 184 is a catalytic residue. Residue aspartate 185 participates in Ca(2+) binding. Residue aspartate 214 is part of the active site. Asparagine 280 is a glycosylation site (N-linked (GlcNAc...) asparagine). The interval 283 to 354 (WSSRATSPTP…LQGPQGGLKP (72 aa)) is disordered. Residues 284–296 (SSRATSPTPSSRS) are compositionally biased toward low complexity. Residues 302–322 (PRQKQHLRKGPPHQKGSKRPS) are compositionally biased toward basic residues. Residues asparagine 325, asparagine 396, and asparagine 439 are each glycosylated (N-linked (GlcNAc...) asparagine). Residues 458–482 (QQRRHQLQDKGTDERQPWPSEPLRG) are disordered. The span at 463–473 (QLQDKGTDERQ) shows a compositional bias: basic and acidic residues.

The protein belongs to the phospholipase A2 family. Requires Ca(2+) as cofactor. N-glycosylation does not affect the catalytic activity, but is required for proper secretion. A nonglycosylated form is observed in several cell types. In terms of processing, in several cell types, the N- and C-termini are cleaved off. Expressed in kidney, heart, liver, and skeletal muscle. Also present in placenta and peripheral blood leukocytes. Not detected in colon, thymus, spleen and small intestine. In lung, expressed in bronchial epithelial cells and alveolar macrophages, but scarcely detected in alveolar epithelium, arterial walls and interstitial fibroblasts (at protein level). In joints of osteoarthritis and rheumatoid arthritis, expressed in endothelial cells (at protein level). In normal heart, detected in some vessels. In myocardial tissues with acute infarction, expressed in vascular endothelial cells adjacent to cardiomyocytes and those in lesions with granulation. Expression in cardiomyocytes is scarce (at protein level). In uterus, breast and colon cancers, detected in tumor cells and neighboring microvascular endothelium, but not in normal glandular tissues (at protein level). Expressed in dermal resting mast cells (at protein level) and pulmonary mast cells. Expressed in neuronal fibers (at protein level). Highly expressed in dorsal root ganglia neurons (at protein level). Expressed in Purkinje cells in cerebellum (at protein level). In stomach is preferentially expressed in neuronal fibers and in microvascular endothelium. Sparsely expressed in normal aorta (at protein level). Highly expressed in macrophages and smooth muscle cells in aorta with atheroma.

It localises to the secreted. The protein resides in the cell membrane. The protein localises to the cytoplasm. It is found in the cytoskeleton. Its subcellular location is the microtubule organizing center. It localises to the centrosome. The protein resides in the centriole. The protein localises to the recycling endosome. The enzyme catalyses a 1,2-diacyl-sn-glycero-3-phosphocholine + H2O = a 1-acyl-sn-glycero-3-phosphocholine + a fatty acid + H(+). The catalysed reaction is 1-hexadecanoyl-2-(9Z,12Z-octadecadienoyl)-sn-glycero-3-phosphocholine + H2O = (9Z,12Z)-octadecadienoate + 1-hexadecanoyl-sn-glycero-3-phosphocholine + H(+). It carries out the reaction 1-hexadecanoyl-2-(5Z,8Z,11Z,14Z-eicosatetraenoyl)-sn-glycero-3-phosphocholine + H2O = 1-hexadecanoyl-sn-glycero-3-phosphocholine + (5Z,8Z,11Z,14Z)-eicosatetraenoate + H(+). It catalyses the reaction 1-hexadecanoyl-2-(9Z,12Z-octadecadienoyl)-sn-glycero-3-phosphoethanolamine + H2O = 1-hexadecanoyl-sn-glycero-3-phosphoethanolamine + (9Z,12Z)-octadecadienoate + H(+). The enzyme catalyses 1-hexadecanoyl-2-(5Z,8Z,11Z,14Z-eicosatetraenoyl)-sn-glycero-3-phosphoethanolamine + H2O = 1-hexadecanoyl-sn-glycero-3-phosphoethanolamine + (5Z,8Z,11Z,14Z)-eicosatetraenoate + H(+). Its activity is regulated as follows. Arachidonic acid release is markedly increased by glypican, a glycosylphosphatidylinositol-anchored heparan sulfate proteoglycan. In terms of biological role, secretory calcium-dependent phospholipase A2 that primarily targets extracellular phospholipids. Hydrolyzes the ester bond of the fatty acyl group attached at sn-2 position of phospholipids without apparent head group selectivity. Contributes to phospholipid remodeling of low-density lipoprotein (LDL) and high-density lipoprotein (HDL) particles. Hydrolyzes LDL phospholipids releasing unsaturated fatty acids that regulate macrophage differentiation toward foam cells. May act in an autocrine and paracrine manner. Secreted by immature mast cells, acts on nearby fibroblasts upstream to PTDGS to synthesize prostaglandin D2 (PGD2), which in turn promotes mast cell maturation and degranulation via PTGDR. Secreted by epididymal epithelium, acts on immature sperm cells within the duct, modulating the degree of unsaturation of the fatty acyl components of phosphatidylcholines required for acrosome assembly and sperm cell motility. Facilitates the replacement of fatty acyl chains in phosphatidylcholines in sperm membranes from omega-6 and omega-9 to omega-3 polyunsaturated fatty acids (PUFAs). Coupled to lipoxygenase pathway, may process omega-6 PUFAs to generate oxygenated lipid mediators in the male reproductive tract. At pericentrosomal preciliary compartment, negatively regulates ciliogenesis likely by regulating endocytotic recycling of ciliary membrane protein. Coupled to cyclooxygenase pathway provides arachidonate to generate prostaglandin E2 (PGE2), a potent immunomodulatory lipid in inflammation and tumorigenesis. At colonic epithelial barrier, preferentially hydrolyzes phospholipids having arachidonate and docosahexaenoate at sn-2 position, contributing to the generation of oxygenated metabolites involved in colonic stem cell homeostasis. Releases C16:0 and C18:0 lysophosphatidylcholine subclasses from neuron plasma membranes and promotes neurite outgrowth and neuron survival. In Homo sapiens (Human), this protein is Group 3 secretory phospholipase A2.